We begin with the raw amino-acid sequence, 240 residues long: 1-(5-phosphoribosyl)-5-[(5-phosphoribosylamino)methylideneamino] imidazole-4-carboxamide isomerase (240 aa).

Catalysis depends on Asp8, which acts as the Proton acceptor. The active-site Proton donor is Asp129.

The protein belongs to the HisA/HisF family.

The protein localises to the cytoplasm. It catalyses the reaction 1-(5-phospho-beta-D-ribosyl)-5-[(5-phospho-beta-D-ribosylamino)methylideneamino]imidazole-4-carboxamide = 5-[(5-phospho-1-deoxy-D-ribulos-1-ylimino)methylamino]-1-(5-phospho-beta-D-ribosyl)imidazole-4-carboxamide. Its pathway is amino-acid biosynthesis; L-histidine biosynthesis; L-histidine from 5-phospho-alpha-D-ribose 1-diphosphate: step 4/9. The polypeptide is 1-(5-phosphoribosyl)-5-[(5-phosphoribosylamino)methylideneamino] imidazole-4-carboxamide isomerase (Listeria welshimeri serovar 6b (strain ATCC 35897 / DSM 20650 / CCUG 15529 / CIP 8149 / NCTC 11857 / SLCC 5334 / V8)).